Consider the following 192-residue polypeptide: Imidazoleglycerol-phosphate dehydratase (192 aa).

Belongs to the imidazoleglycerol-phosphate dehydratase family.

The protein resides in the cytoplasm. It carries out the reaction D-erythro-1-(imidazol-4-yl)glycerol 3-phosphate = 3-(imidazol-4-yl)-2-oxopropyl phosphate + H2O. The protein operates within amino-acid biosynthesis; L-histidine biosynthesis; L-histidine from 5-phospho-alpha-D-ribose 1-diphosphate: step 6/9. The sequence is that of Imidazoleglycerol-phosphate dehydratase from Staphylococcus aureus (strain bovine RF122 / ET3-1).